Here is a 123-residue protein sequence, read N- to C-terminus: Small ribosomal subunit protein uS12cz/uS12cy (123 aa).

Belongs to the universal ribosomal protein uS12 family. As to quaternary structure, part of the 30S ribosomal subunit.

It localises to the plastid. The protein resides in the chloroplast. With S4 and S5 plays an important role in translational accuracy. Located at the interface of the 30S and 50S subunits. The polypeptide is Small ribosomal subunit protein uS12cz/uS12cy (rps12-A) (Psilotum nudum (Whisk fern)).